Consider the following 368-residue polypeptide: MCGRFALAYDSGDLPQLLRDWNLPVNTPKDASSNSQHPHDEEDTKDQPTVSKDIFKASYNISPTNYSAVYRPDTKAIQFMRWGLVPFWTKDVSQFKTYRTFNARLENLQESKMWMRPCEKKRCAVLMSGYFEWKTVGKKKTPYFISRRDGRLMFVAGMYDYVEKDDLYTFTIITAQGPRELEWLHERMPCVLEPGTESWDAWMDVDKTTWSTEELVKLLKPDYDESKLQFYQVTDDVGKTTNTGERLIKPLLKEDSDMFSVKREKEEALLENDNEQGIDNRGVKGDKSLKGEDVFNQKKSLKRNSYDGLKKNEEQEETTLPEEGSIGDRVKREEANLSPKREGNREKRNIVNMLGNQKDSRGKKKIKK.

Cysteine 2 acts as the Nucleophile in catalysis. The residue at position 2 (cysteine 2) is a Thiazolidine linkage to a ring-opened DNA abasic site. The segment at 25 to 48 (VNTPKDASSNSQHPHDEEDTKDQP) is disordered. Over residues 37–46 (HPHDEEDTKD) the composition is skewed to basic and acidic residues. Residue glutamate 132 is part of the active site. The disordered stretch occupies residues 270–368 (LENDNEQGID…DSRGKKKIKK (99 aa)). Composition is skewed to basic and acidic residues over residues 281–296 (RGVKGDKSLKGEDVFN), 304–313 (NSYDGLKKNE), and 326–349 (IGDRVKREEANLSPKREGNREKRN). Serine 338 carries the post-translational modification Phosphoserine.

Belongs to the SOS response-associated peptidase family.

It localises to the chromosome. With respect to regulation, formation and reversal of DNA-protein cross-link depends on DNA context. Catalyzes formation of the thiazolidine linkage in presence of abasic sites in single-stranded DNA. Mediates the reversal of the thiazolidine cross-link in presence of double stranded DNA. Its function is as follows. Sensor of abasic sites in single-stranded DNA (ssDNA) required to preserve genome integrity by promoting error-free repair of abasic sites. Recognizes and binds abasic sites in ssDNA at replication forks and chemically modifies the lesion by forming a covalent cross-link with DNA: forms a stable thiazolidine linkage between a ring-opened abasic site and the alpha-amino and sulfhydryl substituents of its N-terminal catalytic cysteine residue. The DNA-protein cross-link is then reversed: able to catalyze the reversal of the thiazolidine cross-link and cycle between a cross-link and a non-cross-linked state depending on DNA context: mediates self-reversal of the thiazolidine cross-link in double stranded DNA. Acts as a protease: mediates autocatalytic processing of its N-terminal methionine in order to expose the catalytic cysteine. This Saccharomyces cerevisiae (strain ATCC 204508 / S288c) (Baker's yeast) protein is Abasic site processing protein YMR114C.